The primary structure comprises 194 residues: RNA polymerase II subunit A C-terminal domain phosphatase SSU72 like protein 2 (194 aa).

It belongs to the SSU72 phosphatase family.

Its subcellular location is the nucleus. The enzyme catalyses O-phospho-L-seryl-[protein] + H2O = L-seryl-[protein] + phosphate. It carries out the reaction O-phospho-L-threonyl-[protein] + H2O = L-threonyl-[protein] + phosphate. In terms of biological role, protein phosphatase that catalyzes the dephosphorylation of the C-terminal domain of RNA polymerase II. Plays a role in RNA processing and termination. The chain is RNA polymerase II subunit A C-terminal domain phosphatase SSU72 like protein 2 from Homo sapiens (Human).